We begin with the raw amino-acid sequence, 522 residues long: MYIPGPLRLSSYLLPFLSSPSPPAQSSPDTRTISFKPVHAHGHAFVDNASTPTLLFLDQSPSASLYAHDYPIGAFGDDYVLPRLTSDVLEIRTRKKLIRRPKVRPPRIISWAQSYRAQALHFNGINNNNDNSNKSISLPESWLAPDLANPSDEWSDVEVTVPDLTDRQTVITLAKMSSNAYVTPGGAGWYTLNDWNASMPFGWEPDADGLRGHVFADEKNETVIISIKGTSAGVLGSGGPTAKNDKFNDNLLFSCCCARVDFSWTPVCDCYAGGYKCGQTCLEDALVSESVYATVGTNLYNNITYMYPNATIWLTGHSLGGAVSSLIGLSFGAPAVTYESPGELLPASRLHLPLPPGMPANLSGITHVYHTADPIAMGVCNGPYSSCYAAGFAMESKCHTGETILYDTVRVKGWSVDVRTHRIEEVIDKVLADPWPEEGEGKSGVWEKAVEGWYRAADRVRAALDESVVRDDVNVWWGWGRRGPKRQPGGEDPGWRKHGGVPKPVSEEDCVDCYKWEFGEWN.

Over 1-5 (MYIPG) the chain is Cytoplasmic. A helical; Signal-anchor for type II membrane protein membrane pass occupies residues 6 to 26 (PLRLSSYLLPFLSSPSPPAQS). The Lumenal portion of the chain corresponds to 27-522 (SPDTRTISFK…CYKWEFGEWN (496 aa)). 6 N-linked (GlcNAc...) asparagine glycosylation sites follow: asparagine 48, asparagine 133, asparagine 196, asparagine 220, asparagine 302, and asparagine 309. The active-site Charge relay system is serine 318. Asparagine 361 is a glycosylation site (N-linked (GlcNAc...) asparagine). The interval 481–506 (RRGPKRQPGGEDPGWRKHGGVPKPVS) is disordered.

The protein belongs to the AB hydrolase superfamily. Lipase family. In terms of assembly, binds to both phosphatidylinositol (PI) and phosphatidylinositol 3,5-bisphosphate (PIP2).

It is found in the endoplasmic reticulum membrane. Its subcellular location is the golgi apparatus membrane. It localises to the endosome. The protein resides in the multivesicular body membrane. The protein localises to the prevacuolar compartment membrane. It catalyses the reaction a triacylglycerol + H2O = a diacylglycerol + a fatty acid + H(+). Its function is as follows. Lipase which is essential for lysis of subvacuolar cytoplasm to vacuole targeted bodies and intravacuolar autophagic bodies. Involved in the lysis of intravacuolar multivesicular body (MVB) vesicles. The intravacuolar membrane disintegration by ATG15 is critical to life span extension. The polypeptide is Putative lipase ATG15 (ATG15) (Cryptococcus neoformans var. neoformans serotype D (strain JEC21 / ATCC MYA-565) (Filobasidiella neoformans)).